We begin with the raw amino-acid sequence, 229 residues long: Ribose-5-phosphate isomerase A (229 aa).

Substrate is bound by residues Thr-28 to Thr-31, Asp-85 to Asp-88, and Lys-98 to Gly-101. The active-site Proton acceptor is Glu-107. Lys-125 is a binding site for substrate.

Belongs to the ribose 5-phosphate isomerase family. In terms of assembly, homodimer.

It catalyses the reaction aldehydo-D-ribose 5-phosphate = D-ribulose 5-phosphate. It participates in carbohydrate degradation; pentose phosphate pathway; D-ribose 5-phosphate from D-ribulose 5-phosphate (non-oxidative stage): step 1/1. Its function is as follows. Catalyzes the reversible conversion of ribose-5-phosphate to ribulose 5-phosphate. In Thermococcus kodakarensis (strain ATCC BAA-918 / JCM 12380 / KOD1) (Pyrococcus kodakaraensis (strain KOD1)), this protein is Ribose-5-phosphate isomerase A.